The chain runs to 515 residues: Histidine ammonia-lyase (515 aa).

Positions Ala145 to Gly147 form a cross-link, 5-imidazolinone (Ala-Gly). Residue Ser146 is modified to 2,3-didehydroalanine (Ser).

This sequence belongs to the PAL/histidase family. Post-translationally, contains an active site 4-methylidene-imidazol-5-one (MIO), which is formed autocatalytically by cyclization and dehydration of residues Ala-Ser-Gly.

Its subcellular location is the cytoplasm. The enzyme catalyses L-histidine = trans-urocanate + NH4(+). Its pathway is amino-acid degradation; L-histidine degradation into L-glutamate; N-formimidoyl-L-glutamate from L-histidine: step 1/3. The polypeptide is Histidine ammonia-lyase (Gluconobacter oxydans (strain 621H) (Gluconobacter suboxydans)).